The primary structure comprises 297 residues: uncharacterized protein (297 aa).

The next 7 membrane-spanning stretches (helical) occupy residues L14–F34, L55–F75, F81–L101, A110–F130, L135–F155, I163–I183, and L208–F228.

The protein localises to the cell membrane. This is an uncharacterized protein from Methanocaldococcus jannaschii (strain ATCC 43067 / DSM 2661 / JAL-1 / JCM 10045 / NBRC 100440) (Methanococcus jannaschii).